We begin with the raw amino-acid sequence, 1245 residues long: ATP-dependent helicase/deoxyribonuclease subunit B (1245 aa).

The segment at 737–758 is disordered; that stretch reads WDDQNNAPTTDLPDRPNPRASE. Basic and acidic residues predominate over residues 748–758; the sequence is LPDRPNPRASE.

This sequence belongs to the helicase family. AddB/RexB type 2 subfamily. In terms of assembly, heterodimer of AddA and RexB. It depends on Mg(2+) as a cofactor.

Functionally, the heterodimer acts as both an ATP-dependent DNA helicase and an ATP-dependent, dual-direction single-stranded exonuclease. Recognizes the chi site generating a DNA molecule suitable for the initiation of homologous recombination. This subunit has 5' -&gt; 3' nuclease activity but not helicase activity. In Limosilactobacillus fermentum (strain NBRC 3956 / LMG 18251) (Lactobacillus fermentum), this protein is ATP-dependent helicase/deoxyribonuclease subunit B.